A 485-amino-acid chain; its full sequence is Aspartyl/glutamyl-tRNA(Asn/Gln) amidotransferase subunit B (485 aa).

This sequence belongs to the GatB/GatE family. GatB subfamily. As to quaternary structure, heterotrimer of A, B and C subunits.

The catalysed reaction is L-glutamyl-tRNA(Gln) + L-glutamine + ATP + H2O = L-glutaminyl-tRNA(Gln) + L-glutamate + ADP + phosphate + H(+). The enzyme catalyses L-aspartyl-tRNA(Asn) + L-glutamine + ATP + H2O = L-asparaginyl-tRNA(Asn) + L-glutamate + ADP + phosphate + 2 H(+). Functionally, allows the formation of correctly charged Asn-tRNA(Asn) or Gln-tRNA(Gln) through the transamidation of misacylated Asp-tRNA(Asn) or Glu-tRNA(Gln) in organisms which lack either or both of asparaginyl-tRNA or glutaminyl-tRNA synthetases. The reaction takes place in the presence of glutamine and ATP through an activated phospho-Asp-tRNA(Asn) or phospho-Glu-tRNA(Gln). This is Aspartyl/glutamyl-tRNA(Asn/Gln) amidotransferase subunit B from Cupriavidus pinatubonensis (strain JMP 134 / LMG 1197) (Cupriavidus necator (strain JMP 134)).